The primary structure comprises 873 residues: DNA mismatch repair protein MutS (873 aa).

ATP is bound at residue 625–632 (GPNMGGKS).

It belongs to the DNA mismatch repair MutS family.

Its function is as follows. This protein is involved in the repair of mismatches in DNA. It is possible that it carries out the mismatch recognition step. This protein has a weak ATPase activity. The chain is DNA mismatch repair protein MutS from Xanthomonas euvesicatoria pv. vesicatoria (strain 85-10) (Xanthomonas campestris pv. vesicatoria).